The sequence spans 452 residues: Poly(A) polymerase I (452 aa).

Active-site residues include Asp-68, Asp-70, and Asp-150. The tract at residues 427 to 452 (EQQRLHPKPKKKYYRPRRRKTTCSAE) is disordered. The span at 431–452 (LHPKPKKKYYRPRRRKTTCSAE) shows a compositional bias: basic residues.

The protein belongs to the tRNA nucleotidyltransferase/poly(A) polymerase family.

It catalyses the reaction RNA(n) + ATP = RNA(n)-3'-adenine ribonucleotide + diphosphate. In terms of biological role, adds poly(A) tail to the 3' end of many RNAs, which usually targets these RNAs for decay. Plays a significant role in the global control of gene expression, through influencing the rate of transcript degradation, and in the general RNA quality control. The polypeptide is Poly(A) polymerase I (Haemophilus influenzae (strain ATCC 51907 / DSM 11121 / KW20 / Rd)).